A 166-amino-acid polypeptide reads, in one-letter code: Large ribosomal subunit protein uL10 (166 aa).

Belongs to the universal ribosomal protein uL10 family. Part of the ribosomal stalk of the 50S ribosomal subunit. The N-terminus interacts with L11 and the large rRNA to form the base of the stalk. The C-terminus forms an elongated spine to which L12 dimers bind in a sequential fashion forming a multimeric L10(L12)X complex.

Its function is as follows. Forms part of the ribosomal stalk, playing a central role in the interaction of the ribosome with GTP-bound translation factors. This is Large ribosomal subunit protein uL10 from Pseudomonas fluorescens (strain SBW25).